Consider the following 305-residue polypeptide: UDP-N-acetylenolpyruvoylglucosamine reductase 2 (305 aa).

The FAD-binding PCMH-type domain occupies valine 33–glycine 197. Arginine 176 is a catalytic residue. The active-site Proton donor is the serine 226. Glutamate 296 is a catalytic residue.

The protein belongs to the MurB family. FAD is required as a cofactor.

It is found in the cytoplasm. The enzyme catalyses UDP-N-acetyl-alpha-D-muramate + NADP(+) = UDP-N-acetyl-3-O-(1-carboxyvinyl)-alpha-D-glucosamine + NADPH + H(+). It participates in cell wall biogenesis; peptidoglycan biosynthesis. In terms of biological role, cell wall formation. The sequence is that of UDP-N-acetylenolpyruvoylglucosamine reductase 2 (murB2) from Bacillus anthracis.